Consider the following 387-residue polypeptide: Acyl-CoA dehydrogenase FadE29 (387 aa).

Residues 123–126 (IGYT), Thr-132, and Thr-158 each bind FAD. Glu-241 functions as the Proton acceptor in the catalytic mechanism. 367–369 (VNE) contacts FAD.

This sequence belongs to the acyl-CoA dehydrogenase family. As to quaternary structure, heterotetramer composed of FadE28 and FadE29. It depends on FAD as a cofactor.

It carries out the reaction 3-oxochol-4-en-22-oyl-CoA + A = 3-oxochola-4,17-dien-22-oyl-CoA + AH2. Its pathway is steroid metabolism; cholesterol degradation. Functionally, involved in the third cycle of side chain dehydrogenation in the beta-oxidation of cholesterol catabolism. Contributes partly to the virulence by increasing the efficiency of beta-oxidation. Catalyzes the dehydrogenation of 2'-propanoyl-CoA ester side chains of 3-oxo-4-pregnene-20-carboxyl-CoA (3-OPC-CoA) to yield 3-oxo-4,17-pregnadiene-20-carboxyl-CoA (3-OPDC-CoA). Also able to dehydrogenate steroyl-CoA such as 3-oxo-chol-4-en-24-oyl-CoA (3-OCO-CoA), 1beta-(2'-propanoyl-CoA)-3a-alpha-H- 7a-beta-methylhexahydro-4-indanone (indanone-CoA ester), hexahydroindanone and pregenenone. The sequence is that of Acyl-CoA dehydrogenase FadE29 (fadE29) from Mycobacterium tuberculosis (strain ATCC 25618 / H37Rv).